We begin with the raw amino-acid sequence, 233 residues long: Large ribosomal subunit protein uL1 (233 aa).

The protein belongs to the universal ribosomal protein uL1 family. Part of the 50S ribosomal subunit.

In terms of biological role, binds directly to 23S rRNA. The L1 stalk is quite mobile in the ribosome, and is involved in E site tRNA release. Functionally, protein L1 is also a translational repressor protein, it controls the translation of the L11 operon by binding to its mRNA. This Shewanella denitrificans (strain OS217 / ATCC BAA-1090 / DSM 15013) protein is Large ribosomal subunit protein uL1.